A 505-amino-acid polypeptide reads, in one-letter code: Formate--tetrahydrofolate ligase (505 aa).

It belongs to the formate--tetrahydrofolate ligase family.

It carries out the reaction (6S)-5,6,7,8-tetrahydrofolate + formate + ATP = (6R)-10-formyltetrahydrofolate + ADP + phosphate. Its pathway is one-carbon metabolism; tetrahydrofolate interconversion. The polypeptide is Formate--tetrahydrofolate ligase (fhs) (Bifidobacterium longum (strain NCC 2705)).